The primary structure comprises 118 residues: Large ribosomal subunit protein uL24 (118 aa).

This sequence belongs to the universal ribosomal protein uL24 family. Part of the 50S ribosomal subunit.

Its function is as follows. One of two assembly initiator proteins, it binds directly to the 5'-end of the 23S rRNA, where it nucleates assembly of the 50S subunit. In terms of biological role, one of the proteins that surrounds the polypeptide exit tunnel on the outside of the subunit. This is Large ribosomal subunit protein uL24 from Prochlorococcus marinus (strain MIT 9515).